The primary structure comprises 445 residues: Chromosomal replication initiator protein DnaA (445 aa).

The domain I, interacts with DnaA modulators stretch occupies residues Met-1–Lys-73. Residues Lys-73–Thr-106 are domain II. Positions Met-107 to Ser-323 are domain III, AAA+ region. 4 residues coordinate ATP: Gly-151, Gly-153, Lys-154, and Thr-155. Residues Ser-324–Lys-445 form a domain IV, binds dsDNA region.

Belongs to the DnaA family. Oligomerizes as a right-handed, spiral filament on DNA at oriC.

Its subcellular location is the cytoplasm. In terms of biological role, plays an essential role in the initiation and regulation of chromosomal replication. ATP-DnaA binds to the origin of replication (oriC) to initiate formation of the DNA replication initiation complex once per cell cycle. Binds the DnaA box (a 9 base pair repeat at the origin) and separates the double-stranded (ds)DNA. Forms a right-handed helical filament on oriC DNA; dsDNA binds to the exterior of the filament while single-stranded (ss)DNA is stabiized in the filament's interior. The ATP-DnaA-oriC complex binds and stabilizes one strand of the AT-rich DNA unwinding element (DUE), permitting loading of DNA polymerase. After initiation quickly degrades to an ADP-DnaA complex that is not apt for DNA replication. Binds acidic phospholipids. The polypeptide is Chromosomal replication initiator protein DnaA (Clostridium botulinum (strain Okra / Type B1)).